Here is a 778-residue protein sequence, read N- to C-terminus: Ent-trachylobane synthase KSL2, chloroplastic (778 aa).

The N-terminal 37 residues, 1–37 (MLLTCTNSLKISSQAKEWESKTLTGMSLEQLNKRIRI), are a transit peptide targeting the chloroplast. Mg(2+) contacts are provided by Asp-529, Asp-533, Asn-672, Asp-673, and Asp-680. The short motif at 529–533 (DDFFD) is the DDXXD motif element.

The protein belongs to the terpene synthase family. The cofactor is Mg(2+).

The protein resides in the plastid. It localises to the chloroplast. It carries out the reaction ent-copalyl diphosphate = ent-trachylobane + diphosphate. It catalyses the reaction ent-copalyl diphosphate = ent-kaur-16-ene + diphosphate. It participates in secondary metabolite biosynthesis; terpenoid biosynthesis. Its function is as follows. Diterpene cyclase involved in the biosynthesis of labdane-related diterpenoids (LRDs) natural products. Catalyzes the cyclization of ent-CDP into ent-trachylobane as a major and ent-kaurene as a minor product. This chain is Ent-trachylobane synthase KSL2, chloroplastic, found in Ricinus communis (Castor bean).